Reading from the N-terminus, the 514-residue chain is 2,3-bisphosphoglycerate-independent phosphoglycerate mutase (514 aa).

Aspartate 14 and serine 64 together coordinate Mn(2+). The active-site Phosphoserine intermediate is the serine 64. Substrate is bound by residues histidine 125, 155-156 (RD), arginine 187, arginine 193, 263-266 (RADR), and lysine 336. 5 residues coordinate Mn(2+): aspartate 403, histidine 407, aspartate 444, histidine 445, and histidine 463.

Belongs to the BPG-independent phosphoglycerate mutase family. As to quaternary structure, monomer. It depends on Mn(2+) as a cofactor.

The enzyme catalyses (2R)-2-phosphoglycerate = (2R)-3-phosphoglycerate. It participates in carbohydrate degradation; glycolysis; pyruvate from D-glyceraldehyde 3-phosphate: step 3/5. Functionally, catalyzes the interconversion of 2-phosphoglycerate and 3-phosphoglycerate. In Shewanella pealeana (strain ATCC 700345 / ANG-SQ1), this protein is 2,3-bisphosphoglycerate-independent phosphoglycerate mutase.